The primary structure comprises 275 residues: Thymidylate synthase (275 aa).

138 to 139 lines the dUMP pocket; the sequence is RR. Cys158 acts as the Nucleophile in catalysis. DUMP contacts are provided by residues 178–181, Asn189, and 219–221; these read RSCD and HIY. Asp181 is a (6R)-5,10-methylene-5,6,7,8-tetrahydrofolate binding site. (6R)-5,10-methylene-5,6,7,8-tetrahydrofolate is bound at residue Ala274.

It belongs to the thymidylate synthase family. Bacterial-type ThyA subfamily. Homodimer.

The protein localises to the cytoplasm. It carries out the reaction dUMP + (6R)-5,10-methylene-5,6,7,8-tetrahydrofolate = 7,8-dihydrofolate + dTMP. Its pathway is pyrimidine metabolism; dTTP biosynthesis. Functionally, catalyzes the reductive methylation of 2'-deoxyuridine-5'-monophosphate (dUMP) to 2'-deoxythymidine-5'-monophosphate (dTMP) while utilizing 5,10-methylenetetrahydrofolate (mTHF) as the methyl donor and reductant in the reaction, yielding dihydrofolate (DHF) as a by-product. This enzymatic reaction provides an intracellular de novo source of dTMP, an essential precursor for DNA biosynthesis. The protein is Thymidylate synthase of Fusobacterium nucleatum subsp. nucleatum (strain ATCC 25586 / DSM 15643 / BCRC 10681 / CIP 101130 / JCM 8532 / KCTC 2640 / LMG 13131 / VPI 4355).